A 55-amino-acid polypeptide reads, in one-letter code: uncharacterized protein (55 aa).

This is an uncharacterized protein from Clostridium perfringens.